We begin with the raw amino-acid sequence, 261 residues long: Indole-3-glycerol phosphate synthase (261 aa).

The protein belongs to the TrpC family.

It catalyses the reaction 1-(2-carboxyphenylamino)-1-deoxy-D-ribulose 5-phosphate + H(+) = (1S,2R)-1-C-(indol-3-yl)glycerol 3-phosphate + CO2 + H2O. It functions in the pathway amino-acid biosynthesis; L-tryptophan biosynthesis; L-tryptophan from chorismate: step 4/5. The polypeptide is Indole-3-glycerol phosphate synthase (Burkholderia lata (strain ATCC 17760 / DSM 23089 / LMG 22485 / NCIMB 9086 / R18194 / 383)).